The primary structure comprises 480 residues: Glutamate--tRNA ligase (480 aa).

The 'HIGH' region motif lies at 9-19 (PSPTGNLHIGT). A 'KMSKS' region motif is present at residues 250–254 (KLSKR). Residue Lys253 participates in ATP binding.

This sequence belongs to the class-I aminoacyl-tRNA synthetase family. Glutamate--tRNA ligase type 1 subfamily. As to quaternary structure, monomer.

It localises to the cytoplasm. The catalysed reaction is tRNA(Glu) + L-glutamate + ATP = L-glutamyl-tRNA(Glu) + AMP + diphosphate. In terms of biological role, catalyzes the attachment of glutamate to tRNA(Glu) in a two-step reaction: glutamate is first activated by ATP to form Glu-AMP and then transferred to the acceptor end of tRNA(Glu). This Microcystis aeruginosa (strain NIES-843 / IAM M-2473) protein is Glutamate--tRNA ligase.